The sequence spans 269 residues: Hydroxyethylthiazole kinase (269 aa).

M42 serves as a coordination point for substrate. 2 residues coordinate ATP: R118 and S164. G191 is a binding site for substrate.

This sequence belongs to the Thz kinase family. The cofactor is Mg(2+).

It catalyses the reaction 5-(2-hydroxyethyl)-4-methylthiazole + ATP = 4-methyl-5-(2-phosphooxyethyl)-thiazole + ADP + H(+). It participates in cofactor biosynthesis; thiamine diphosphate biosynthesis; 4-methyl-5-(2-phosphoethyl)-thiazole from 5-(2-hydroxyethyl)-4-methylthiazole: step 1/1. Catalyzes the phosphorylation of the hydroxyl group of 4-methyl-5-beta-hydroxyethylthiazole (THZ). The polypeptide is Hydroxyethylthiazole kinase (Listeria monocytogenes serotype 4a (strain HCC23)).